Here is a 231-residue protein sequence, read N- to C-terminus: Ribonuclease HII (231 aa).

The 190-residue stretch at 33-222 (WPVAGADEAG…FREAQEQPLA (190 aa)) folds into the RNase H type-2 domain. The a divalent metal cation site is built by D39, E40, and D130.

It belongs to the RNase HII family. Requires Mn(2+) as cofactor. It depends on Mg(2+) as a cofactor.

It is found in the cytoplasm. It catalyses the reaction Endonucleolytic cleavage to 5'-phosphomonoester.. Functionally, endonuclease that specifically degrades the RNA of RNA-DNA hybrids. The chain is Ribonuclease HII from Sinorhizobium fredii (strain NBRC 101917 / NGR234).